We begin with the raw amino-acid sequence, 359 residues long: Opine dehydrogenase (359 aa).

The protein belongs to the lysopine/nopaline/octopine/opine/vitopine dehydrogenases family. Homodimer.

It carries out the reaction (2S)-2-[(R)-1-carboxyethylamino]pentanoate + NAD(+) + H2O = L-2-aminopentanoate + pyruvate + NADH + H(+). Its function is as follows. In the forward direction also acts on secondary amine dicarboxylates such as N-(1-carboxyethyl)methionine and N-(1-carboxyethyl)phenylalanine. In the reverse direction, the enzyme also acts on neutral amino acids as an amino donor. They include L-amino acids such as 2-aminopentanoic acid, 2-aminobutyric acid, 2-aminohexanoic acid, 3-chloroalanine, O-acetylserine, methionine, isoleucine, valine, phenylalanine, leucine and alanine. In Arthrobacter sp. (strain 1C), this protein is Opine dehydrogenase (odh).